The sequence spans 335 residues: Tetraacyldisaccharide 4'-kinase (335 aa).

62 to 69 is an ATP binding site; sequence NVGGTGKT.

This sequence belongs to the LpxK family.

It carries out the reaction a lipid A disaccharide + ATP = a lipid IVA + ADP + H(+). Its pathway is glycolipid biosynthesis; lipid IV(A) biosynthesis; lipid IV(A) from (3R)-3-hydroxytetradecanoyl-[acyl-carrier-protein] and UDP-N-acetyl-alpha-D-glucosamine: step 6/6. Functionally, transfers the gamma-phosphate of ATP to the 4'-position of a tetraacyldisaccharide 1-phosphate intermediate (termed DS-1-P) to form tetraacyldisaccharide 1,4'-bis-phosphate (lipid IVA). In Methylobacillus flagellatus (strain ATCC 51484 / DSM 6875 / VKM B-1610 / KT), this protein is Tetraacyldisaccharide 4'-kinase.